A 744-amino-acid chain; its full sequence is Catalase-peroxidase (744 aa).

The first 22 residues, 1-22, serve as a signal peptide directing secretion; it reads MSPRARRCTDRCARMSERSMNA. Residues 114–234 constitute a cross-link (tryptophyl-tyrosyl-methioninium (Trp-Tyr) (with M-260)); it reads WHSAGTYRLA…LGATEMGLIY (121 aa). Residue His-115 is the Proton acceptor of the active site. The segment at residues 234–260 is a cross-link (tryptophyl-tyrosyl-methioninium (Tyr-Met) (with W-114)); the sequence is YVNPEGPDRNGDPISAAKFIRETFARM. A heme b-binding site is contributed by His-275.

It belongs to the peroxidase family. Peroxidase/catalase subfamily. As to quaternary structure, homodimer or homotetramer. The cofactor is heme b. Formation of the three residue Trp-Tyr-Met cross-link is important for the catalase, but not the peroxidase activity of the enzyme.

The enzyme catalyses H2O2 + AH2 = A + 2 H2O. It catalyses the reaction 2 H2O2 = O2 + 2 H2O. Bifunctional enzyme with both catalase and broad-spectrum peroxidase activity. In Azorhizobium caulinodans (strain ATCC 43989 / DSM 5975 / JCM 20966 / LMG 6465 / NBRC 14845 / NCIMB 13405 / ORS 571), this protein is Catalase-peroxidase.